The following is a 346-amino-acid chain: Sensor histidine kinase GraS (346 aa).

2 consecutive transmembrane segments (helical) span residues 15–35 (MNWI…SLID) and 43–63 (LFYI…LTYF). The Histidine kinase domain maps to 126–332 (EFVHDIKTPV…TVRLIFPLQN (207 aa)).

Interacts with GraX.

Its subcellular location is the cell membrane. It catalyses the reaction ATP + protein L-histidine = ADP + protein N-phospho-L-histidine.. In terms of biological role, member of the two-component regulatory system GraR/GraS involved in resistance against cationic antimicrobial peptides (CAMPs). Functions as a sensor protein kinase which phosphorylates GraR through the auxiliary protein GraX. In turn, GraR up-regulates many genes such as adhesins, exoproteins, transporters, toxins, and proteins involved in cell wall synthesis. Down-regulates the expression of many genes involved in RNA and amino acid synthesis or glycolysis. The polypeptide is Sensor histidine kinase GraS (graS) (Staphylococcus aureus (strain COL)).